The primary structure comprises 351 residues: RCC1 repeat-containing protein C10F6.04 (351 aa).

4 RCC1 repeats span residues 1 to 48 (MLLS…LLDE), 50 to 106 (SQLW…IVHA), 108 to 162 (RRRV…CVTN), and 163 to 212 (EGNL…VLQE).

The protein localises to the cytoplasm. It is found in the nucleus. The chain is RCC1 repeat-containing protein C10F6.04 from Schizosaccharomyces pombe (strain 972 / ATCC 24843) (Fission yeast).